The primary structure comprises 85 residues: UPF0297 protein CLL_A1175 (85 aa).

It belongs to the UPF0297 family.

The polypeptide is UPF0297 protein CLL_A1175 (Clostridium botulinum (strain Eklund 17B / Type B)).